A 931-amino-acid polypeptide reads, in one-letter code: Bifunctional uridylyltransferase/uridylyl-removing enzyme (931 aa).

Residues 1 to 383 (MDSVATDSKA…TTGSTWRRVP (383 aa)) form a uridylyltransferase region. A uridylyl-removing region spans residues 384–739 (ESDDFIVDNN…VGFDPARGVT (356 aa)). The 124-residue stretch at 499 to 622 (VDEHLIRCIG…VQSVEQMKLL (124 aa)) folds into the HD domain. ACT domains are found at residues 740–822 (ELTI…AVAR) and 851–931 (VIEV…QPAA).

The protein belongs to the GlnD family. Mg(2+) is required as a cofactor.

The catalysed reaction is [protein-PII]-L-tyrosine + UTP = [protein-PII]-uridylyl-L-tyrosine + diphosphate. The enzyme catalyses [protein-PII]-uridylyl-L-tyrosine + H2O = [protein-PII]-L-tyrosine + UMP + H(+). With respect to regulation, uridylyltransferase (UTase) activity is inhibited by glutamine, while glutamine activates uridylyl-removing (UR) activity. Modifies, by uridylylation and deuridylylation, the PII regulatory proteins (GlnB and homologs), in response to the nitrogen status of the cell that GlnD senses through the glutamine level. Under low glutamine levels, catalyzes the conversion of the PII proteins and UTP to PII-UMP and PPi, while under higher glutamine levels, GlnD hydrolyzes PII-UMP to PII and UMP (deuridylylation). Thus, controls uridylylation state and activity of the PII proteins, and plays an important role in the regulation of nitrogen fixation and metabolism. In Bradyrhizobium sp. (strain ORS 278), this protein is Bifunctional uridylyltransferase/uridylyl-removing enzyme.